The chain runs to 364 residues: DNA-(apurinic or apyrimidinic site) endonuclease (364 aa).

Basic and acidic residues-rich tracts occupy residues 1-12 (MKRFFKPIEKEN) and 23-39 (PEKR…EKNQ). The disordered stretch occupies residues 1–42 (MKRFFKPIEKENSPAAKKPCLSPEKRDGDGDGVEEEKNQNEP). Glutamate 80 is a binding site for Mg(2+). The active site involves tyrosine 182. Residues aspartate 222, asparagine 224, and aspartate 342 each coordinate Mg(2+). Catalysis depends on aspartate 222, which acts as the Proton donor/acceptor.

The protein belongs to the DNA repair enzymes AP/exoA family. Interacts with ROS1. ROS1 is required for APE1L to stably associate with the DNA substrate. It depends on Mg(2+) as a cofactor. In terms of tissue distribution, expressed in leaves, flower buds and developing siliques. Not detected in roots.

It localises to the nucleus. Its subcellular location is the nucleolus. Apurinic/apyrimidinic (AP) endonuclease involved in active DNA demethylation and gene imprinting. According to a report, also displays an in vitro 3'-phosphatase activity. According to another report, has no in vitro 3'-phosphatase activity. Catalyzes the conversion of the 3'-blocking groups 3'-phosphor-alpha,beta-unsaturated aldehyde (3'-PUA) generated by ROS1 to 3'-OH. Has a strong non-specific affinity to DNA. Redundant with APE2 and at least one functional allele is required for seed viability. This is DNA-(apurinic or apyrimidinic site) endonuclease from Arabidopsis thaliana (Mouse-ear cress).